The chain runs to 260 residues: MGRRIRIQRKGAGGIFKSHNKHRKGASKLRPLDYAERHGYIKGLVKDIIHDPGRGAPLAIIAFRDPYKYKTVKTTVVAAEGMHTGQFIHCGAKAQIQIGNIVPVGTLPEGTTICNVENKSGDRGVIARASGNYATVIAHNPDTKKTRIRLPSGAKKVVQSVNRAMIGLVAGGGRTDKPLLKAGRSYHKYKAKRNSWPRVRGVAMNPVEHPHGGGNHQHIGHPSTVRRDASAGKKVGLIAARRTGRIRGGKPVKFTKEENV.

A disordered region spans residues Glu208 to Ser230.

This sequence belongs to the universal ribosomal protein uL2 family.

The protein resides in the cytoplasm. This is Large ribosomal subunit protein uL2 from Caenorhabditis elegans.